The following is a 461-amino-acid chain: MATWIVGKLIIASLILGIQAQQARTKSQDIFEDDNDNGTTTLESLARLTSPIHIPIEQPQTSDSKILAHLFTSGYDFRVRPPTDNGGPVVVSVNMLLRTISKIDVVNMEYSAQLTLRESWIDKRLSYGVKGDGQPDFVILTVGHQIWMPDTFFPNEKQAYKHTIDKPNVLIRIHNDGTVLYSVRISLVLSCPMYLQYYPMDVQQCSIDLASYAYTTKDIEYLWKEHSPLQLKVGLSSSLPSFQLTNTSTTYCTSVTNTGIYSCLRTTIQLKREFSFYLLQLYIPSCMLVIVSWVSFWFDRTAIPARVTLGVTTLLTMTAQSAGINSQLPPVSYIKAIDVWIGACMTFIFCALLEFALVNHIANKQGVERKARTEREKAEIPLLQNLHNDVPTKVFNQEEKVRTVPLNRRQMNSFLNLLETKTEWNDISKRVDLISRALFPVLFFVFNILYWSRFGQQNVLF.

The first 20 residues, 1–20, serve as a signal peptide directing secretion; it reads MATWIVGKLIIASLILGIQA. Over 21–275 the chain is Extracellular; it reads QQARTKSQDI…TTIQLKREFS (255 aa). R98, R117, and S182 together coordinate L-glutamate. C191 and C205 are joined by a disulfide. S211 provides a ligand contact to L-glutamate. N246 carries an N-linked (GlcNAc...) asparagine glycan. A disulfide bridge connects residues C252 and C263. Residues 276–298 traverse the membrane as a helical segment; it reads FYLLQLYIPSCMLVIVSWVSFWF. Residues 299–303 lie on the Cytoplasmic side of the membrane; it reads DRTAI. A helical membrane pass occupies residues 304-325; that stretch reads PARVTLGVTTLLTMTAQSAGIN. The Extracellular segment spans residues 326–332; sequence SQLPPVS. Residues 333–353 form a helical membrane-spanning segment; that stretch reads YIKAIDVWIGACMTFIFCALL. The Cytoplasmic segment spans residues 354 to 432; the sequence is EFALVNHIAN…EWNDISKRVD (79 aa). The chain crosses the membrane as a helical span at residues 433–454; it reads LISRALFPVLFFVFNILYWSRF. At 455–461 the chain is on the extracellular side; that stretch reads GQQNVLF.

The protein belongs to the ligand-gated ion channel (TC 1.A.9) family. Glutamate-gated chloride channel (TC 1.A.9.4) subfamily. Pentamer. Homooligomer, forms functional heterooligomers with glc-2.

It localises to the postsynaptic cell membrane. The protein localises to the cell membrane. Its function is as follows. Glutamate-gated chloride channel subunit; channel properties depend on the subunit composition. Glutamate binding triggers a rapidly reversible current in heteromeric channels formed by glc-1 and glc-2, while the anti-helmintic drug ivermectin and other avermectins trigger a permanently open channel configuration. Channels containing only glc-1 are activated by ivermectin, but not by glutamate alone (in vitro). The heteromeric channel formed by glc-1 and glc-2 is also activated by ibotenate, and it is blocked by picrotoxin and flufenamic acid. Plays a role in the regulation of locomotor behavior. The chain is Glutamate-gated chloride channel alpha from Caenorhabditis elegans.